A 107-amino-acid chain; its full sequence is L-rhamnose mutarotase (107 aa).

Tyr18 lines the substrate pocket. The Proton donor role is filled by His22. Substrate-binding positions include Tyr41 and 76–77 (WW).

It belongs to the rhamnose mutarotase family. As to quaternary structure, homodimer.

It is found in the cytoplasm. The catalysed reaction is alpha-L-rhamnose = beta-L-rhamnose. It participates in carbohydrate metabolism; L-rhamnose metabolism. Its function is as follows. Involved in the anomeric conversion of L-rhamnose. The sequence is that of L-rhamnose mutarotase from Paraburkholderia phytofirmans (strain DSM 17436 / LMG 22146 / PsJN) (Burkholderia phytofirmans).